The following is a 485-amino-acid chain: MSASDFSSAVVVLAAGAGTRMKSDLQKTLHSIGGRSLISHSLHAAAGLNPEHIVAVIGHGRDQVGPAVAQVAEELDREVLIAIQEEQNGTGHAVQCAMDQLDGFEGTIIVTNGDVPLLTDHTLSALLDAHVEVPTAVTVLTMRLDDPTGYGRIVRNEEGEVTAIVEQKDASAEIQAIDEVNSGVFAFDAAILRSALAELKSDNAQGELYLTDVLGIARGEGHPVRAHTATDARELAGVNDRVQLAEAGAELNRRTVIAAMRGGATIVDPATTWIDVEVSIGRDVIIHPGTQLKGETVIGDRVEVGPDTTLTNMTINEGASVVRTHGFDSTIGENATVGPFTYIRPGTTLGPEGKLGGFVETKKATIGRGSKVPHLTYVGDATIGEESNIGASSVFVNYDGENKHHTTIGSHVRTGSDTMFIAPVTVGDGAYSGAGTVIKDDVPPGALAVSGGRQRNIEGWVQKKRPGTAAAQAAEAAQNVHNQEG.

The segment at 1 to 241 is pyrophosphorylase; the sequence is MSASDFSSAV…ARELAGVNDR (241 aa). Residues 13 to 16, Lys-27, Gln-84, and 89 to 90 each bind UDP-N-acetyl-alpha-D-glucosamine; these read LAAG and GT. Mg(2+) is bound at residue Asp-114. The UDP-N-acetyl-alpha-D-glucosamine site is built by Gly-151, Glu-166, Asn-181, and Asn-239. A Mg(2+)-binding site is contributed by Asn-239. Positions 242–262 are linker; it reads VQLAEAGAELNRRTVIAAMRG. The interval 263–485 is N-acetyltransferase; the sequence is GATIVDPATT…AAQNVHNQEG (223 aa). Positions 344 and 362 each coordinate UDP-N-acetyl-alpha-D-glucosamine. The Proton acceptor role is filled by His-374. 2 residues coordinate UDP-N-acetyl-alpha-D-glucosamine: Tyr-377 and Asn-388. Residues Ala-391, 397–398, Ser-416, and Ala-434 contribute to the acetyl-CoA site; that span reads NY. A disordered region spans residues 465 to 485; that stretch reads RPGTAAAQAAEAAQNVHNQEG. The segment covering 469–478 has biased composition (low complexity); the sequence is AAAQAAEAAQ.

In the N-terminal section; belongs to the N-acetylglucosamine-1-phosphate uridyltransferase family. It in the C-terminal section; belongs to the transferase hexapeptide repeat family. Homotrimer. It depends on Mg(2+) as a cofactor.

Its subcellular location is the cytoplasm. The catalysed reaction is alpha-D-glucosamine 1-phosphate + acetyl-CoA = N-acetyl-alpha-D-glucosamine 1-phosphate + CoA + H(+). The enzyme catalyses N-acetyl-alpha-D-glucosamine 1-phosphate + UTP + H(+) = UDP-N-acetyl-alpha-D-glucosamine + diphosphate. It functions in the pathway nucleotide-sugar biosynthesis; UDP-N-acetyl-alpha-D-glucosamine biosynthesis; N-acetyl-alpha-D-glucosamine 1-phosphate from alpha-D-glucosamine 6-phosphate (route II): step 2/2. The protein operates within nucleotide-sugar biosynthesis; UDP-N-acetyl-alpha-D-glucosamine biosynthesis; UDP-N-acetyl-alpha-D-glucosamine from N-acetyl-alpha-D-glucosamine 1-phosphate: step 1/1. Its pathway is bacterial outer membrane biogenesis; LPS lipid A biosynthesis. Its function is as follows. Catalyzes the last two sequential reactions in the de novo biosynthetic pathway for UDP-N-acetylglucosamine (UDP-GlcNAc). The C-terminal domain catalyzes the transfer of acetyl group from acetyl coenzyme A to glucosamine-1-phosphate (GlcN-1-P) to produce N-acetylglucosamine-1-phosphate (GlcNAc-1-P), which is converted into UDP-GlcNAc by the transfer of uridine 5-monophosphate (from uridine 5-triphosphate), a reaction catalyzed by the N-terminal domain. In Corynebacterium glutamicum (strain R), this protein is Bifunctional protein GlmU.